The chain runs to 291 residues: Ribose-phosphate pyrophosphokinase (291 aa).

Residues 34–36 (DGE) and 92–93 (RQ) contribute to the ATP site. The Mg(2+) site is built by H125 and D165. Residue K188 is part of the active site. D-ribose 5-phosphate contacts are provided by R190 and D214.

Belongs to the ribose-phosphate pyrophosphokinase family. Class III (archaeal) subfamily. Mg(2+) serves as cofactor.

The protein localises to the cytoplasm. The catalysed reaction is D-ribose 5-phosphate + ATP = 5-phospho-alpha-D-ribose 1-diphosphate + AMP + H(+). It participates in metabolic intermediate biosynthesis; 5-phospho-alpha-D-ribose 1-diphosphate biosynthesis; 5-phospho-alpha-D-ribose 1-diphosphate from D-ribose 5-phosphate (route I): step 1/1. Functionally, involved in the biosynthesis of the central metabolite phospho-alpha-D-ribosyl-1-pyrophosphate (PRPP) via the transfer of pyrophosphoryl group from ATP to 1-hydroxyl of ribose-5-phosphate (Rib-5-P). This is Ribose-phosphate pyrophosphokinase from Methanopyrus kandleri (strain AV19 / DSM 6324 / JCM 9639 / NBRC 100938).